We begin with the raw amino-acid sequence, 738 residues long: Integrin beta-2-like protein (738 aa).

An N-terminal signal peptide occupies residues 1-22 (MLGQCTLLPVLAGLLSLESALS). At 23–671 (QLCTKDNVST…LVCAEISNTT (649 aa)) the chain is on the extracellular side. The region spanning 24 to 74 (LCTKDNVSTCQDCIRSGPSCAWCQKLNFTGRGEPDSVRCDTPEQLLLKGCT) is the PSI domain. Intrachain disulfides connect Cys-25-Cys-419, Cys-33-Cys-43, Cys-36-Cys-73, Cys-46-Cys-62, Cys-218-Cys-258, Cys-358-Cys-372, Cys-421-Cys-439, Cys-431-Cys-442, Cys-444-Cys-453, Cys-455-Cys-486, Cys-469-Cys-484, Cys-478-Cys-489, Cys-491-Cys-506, Cys-508-Cys-531, Cys-513-Cys-529, Cys-521-Cys-534, Cys-536-Cys-545, Cys-547-Cys-570, Cys-554-Cys-568, Cys-562-Cys-573, Cys-575-Cys-584, Cys-594-Cys-603, and Cys-600-Cys-664. The N-linked (GlcNAc...) asparagine glycan is linked to Asn-29. 8 N-linked (GlcNAc...) asparagine glycosylation sites follow: Asn-50, Asn-102, Asn-173, Asn-226, Asn-252, Asn-342, Asn-360, and Asn-386. Positions 126-329 (SVDLYFLMGL…DSSNVAQLIR (204 aa)) constitute a VWFA domain. 4 I-EGF domains span residues 421–454 (CQEQSQHHSLCGGKGAMECGICRCNSGYAGKNCE), 455–507 (CQTQ…QYCE), 508–546 (CNNVNCERYDGQVCGGPERGHCSCGRCFCRYGFVGSACQ), and 547–585 (CRMSTSGCLNNRMVECSGHGRCYCNRCLCDPGYQPPLCE). The N-linked (GlcNAc...) asparagine glycan is linked to Asn-473. 2 N-linked (GlcNAc...) asparagine glycosylation sites follow: Asn-627 and Asn-669. The helical transmembrane segment at 672–692 (ILLGVIVGVLLAVIFLLVYCM) threads the bilayer. Residues 693 to 738 (VYLKGTQKAAKLPRKGGAQSTLAQQPHFQEPHHVEPVWNQERQGTQ) lie on the Cytoplasmic side of the membrane. Residues 709–738 (GAQSTLAQQPHFQEPHHVEPVWNQERQGTQ) are disordered. Over residues 710-719 (AQSTLAQQPH) the composition is skewed to polar residues.

It belongs to the integrin beta chain family. In terms of assembly, monomer and homodimer. Unlike integrin beta chains, no alpha chain partner has yet been found. N-glycosylated. Expressed predominantly in maturing and mature neutrophils.

It localises to the cell membrane. During inflammatory stimulation, plays a role in retaining Cxcl13-expressing cells at the site of the inflammatory response. This Mus musculus (Mouse) protein is Integrin beta-2-like protein.